Consider the following 298-residue polypeptide: 4-hydroxy-tetrahydrodipicolinate synthase (298 aa).

Thr45 lines the pyruvate pocket. Tyr133 functions as the Proton donor/acceptor in the catalytic mechanism. The Schiff-base intermediate with substrate role is filled by Lys161. A pyruvate-binding site is contributed by Ile203.

It belongs to the DapA family. In terms of assembly, homotetramer; dimer of dimers.

The protein localises to the cytoplasm. It carries out the reaction L-aspartate 4-semialdehyde + pyruvate = (2S,4S)-4-hydroxy-2,3,4,5-tetrahydrodipicolinate + H2O + H(+). It participates in amino-acid biosynthesis; L-lysine biosynthesis via DAP pathway; (S)-tetrahydrodipicolinate from L-aspartate: step 3/4. Catalyzes the condensation of (S)-aspartate-beta-semialdehyde [(S)-ASA] and pyruvate to 4-hydroxy-tetrahydrodipicolinate (HTPA). The sequence is that of 4-hydroxy-tetrahydrodipicolinate synthase from Wigglesworthia glossinidia brevipalpis.